The following is a 162-amino-acid chain: UPF0260 protein CC_3276 (162 aa).

This sequence belongs to the UPF0260 family.

The chain is UPF0260 protein CC_3276 from Caulobacter vibrioides (strain ATCC 19089 / CIP 103742 / CB 15) (Caulobacter crescentus).